Here is a 730-residue protein sequence, read N- to C-terminus: Zinc finger protein 615 (730 aa).

One can recognise a KRAB domain in the interval 7–78 (LTLEDVAVDF…EDEIYSRICF (72 aa)). C2H2-type zinc fingers lie at residues 203–225 (HVCS…QRVH), 231–253 (HVCS…QRTH), 259–281 (YECT…QKTH), 287–309 (YTCS…QRTH), 315–337 (HGCS…QKTH), 343–365 (YICS…HRTH), 371–393 (FICN…QQTH), 399–421 (YTCS…QRTH), 427–449 (YKCN…QRTH), 455–477 (YVCT…QRTH), 483–505 (YICN…QRTH), 511–533 (YVCG…QRTH), 539–561 (YICD…RRTH), 567–589 (YVCS…QRTH), 595–617 (YICN…QQTH), 623–645 (YKCN…QRFH), 651–673 (FACT…QRIH), 679–701 (YKCS…QRKH), and 707–729 (YGCS…KRIH).

This sequence belongs to the krueppel C2H2-type zinc-finger protein family.

It is found in the nucleus. May be involved in transcriptional regulation. The chain is Zinc finger protein 615 (ZNF615) from Pongo abelii (Sumatran orangutan).